Here is a 1024-residue protein sequence, read N- to C-terminus: Beta-galactosidase 2 (1024 aa).

2 residues coordinate substrate: Asn103 and Asp202. Asp202 contacts Na(+). Mg(2+)-binding residues include Glu417, His419, and Glu462. Substrate-binding positions include Glu462 and 538–541; that span reads EYAH. The active-site Proton donor is the Glu462. Glu538 functions as the Nucleophile in the catalytic mechanism. Position 598 (Asn598) interacts with Mg(2+). Residues Phe602 and Asn605 each coordinate Na(+). Substrate is bound by residues Asn605 and Trp1000.

It belongs to the glycosyl hydrolase 2 family. Homotetramer. Mg(2+) serves as cofactor. It depends on Na(+) as a cofactor.

It carries out the reaction Hydrolysis of terminal non-reducing beta-D-galactose residues in beta-D-galactosides.. The sequence is that of Beta-galactosidase 2 from Klebsiella pneumoniae subsp. pneumoniae (strain ATCC 700721 / MGH 78578).